The primary structure comprises 341 residues: MQLSDFDFELPEELIAQEPIKQRDQSRLMIVHRDIDRTEHKTFKDLLQYLQPGDVLVMNDSKVLPARIYGEKVSTGAKIEVLLLRQISANQWETLVKPGKRAKIGEILDFGSGKMKGKIVDHTDVGGRVIEFSCQEPFLQVLEQIGSMPLPPYIKKPLTDKQRYQTVYARQEGSAAAPTAGLHFTRELLEEIRNRGVSIVTVLLHVGLGTFRPVQVEDVTSHRMHEEYYEITPQAAEEINQAKLRGGRVIAVGTTSVRCLETSSNEAGQVLPGSGFTDIFIYPGYQFKVIEGLVTNFHLPKSSLLMLISALAGREKILKAYQQAVTEQYRFFSFGDAMLII.

This sequence belongs to the QueA family. In terms of assembly, monomer.

The protein localises to the cytoplasm. The enzyme catalyses 7-aminomethyl-7-carbaguanosine(34) in tRNA + S-adenosyl-L-methionine = epoxyqueuosine(34) in tRNA + adenine + L-methionine + 2 H(+). The protein operates within tRNA modification; tRNA-queuosine biosynthesis. In terms of biological role, transfers and isomerizes the ribose moiety from AdoMet to the 7-aminomethyl group of 7-deazaguanine (preQ1-tRNA) to give epoxyqueuosine (oQ-tRNA). The polypeptide is S-adenosylmethionine:tRNA ribosyltransferase-isomerase (Desulforamulus reducens (strain ATCC BAA-1160 / DSM 100696 / MI-1) (Desulfotomaculum reducens)).